The following is a 194-amino-acid chain: Imidazoleglycerol-phosphate dehydratase (194 aa).

Belongs to the imidazoleglycerol-phosphate dehydratase family.

It is found in the cytoplasm. It catalyses the reaction D-erythro-1-(imidazol-4-yl)glycerol 3-phosphate = 3-(imidazol-4-yl)-2-oxopropyl phosphate + H2O. It participates in amino-acid biosynthesis; L-histidine biosynthesis; L-histidine from 5-phospho-alpha-D-ribose 1-diphosphate: step 6/9. This chain is Imidazoleglycerol-phosphate dehydratase, found in Bacillus thuringiensis (strain Al Hakam).